The sequence spans 120 residues: C-type natriuretic peptide 4 (120 aa).

The signal sequence occupies residues 1 to 22 (MNLSYLVACGLMITLLSVRMGA). A propeptide spanning residues 23–96 (KPLSQAQQKS…PRRHKTGIKK (74 aa)) is cleaved from the precursor. C104 and C120 are disulfide-bonded.

It belongs to the natriuretic peptide family.

It localises to the secreted. Exhibits natriuretic and vasodepressant activity. Has cGMP-stimulating activity. May help to regulate body fluid homeostasis in a variety of aquatic environments. This is C-type natriuretic peptide 4 from Takifugu rubripes (Japanese pufferfish).